Reading from the N-terminus, the 1235-residue chain is DNA polymerase catalytic subunit (1235 aa).

Disordered stretches follow at residues 640–692 and 1098–1134; these read QGRF…TAGR and AAAP…ASKP. Positions 650 to 661 are enriched in basic and acidic residues; the sequence is APKRPAAAREDE. Over residues 662-675 the composition is skewed to acidic residues; sequence ERPEEEGEDEDERE. Residues 676–691 show a composition bias toward basic and acidic residues; that stretch reads EGGGEREPEGARETAG.

Belongs to the DNA polymerase type-B family. Forms a complex with the ssDNA-binding protein UL29, the DNA polymerase processivity factor, and the alkaline exonuclease. Interacts with the putative helicase-primase complex subunit UL8; this interaction may coordinate leading and lagging strand DNA synthesis at the replication fork.

It is found in the host nucleus. The catalysed reaction is DNA(n) + a 2'-deoxyribonucleoside 5'-triphosphate = DNA(n+1) + diphosphate. It catalyses the reaction Endonucleolytic cleavage to 5'-phosphomonoester.. In terms of biological role, replicates viral genomic DNA. The replication complex is composed of six viral proteins: the DNA polymerase, processivity factor, primase, primase-associated factor, helicase, and ssDNA-binding protein. Additionally, the polymerase contains an intrinsic ribonuclease H (RNase H) activity that specifically degrades RNA/DNA heteroduplexes or duplex DNA substrates in the 5' to 3' direction. Therefore, it can catalyze the excision of the RNA primers that initiate the synthesis of Okazaki fragments at a replication fork during viral DNA replication. The protein is DNA polymerase catalytic subunit of Homo sapiens (Human).